A 188-amino-acid polypeptide reads, in one-letter code: Ion-translocating oxidoreductase complex subunit B (188 aa).

The segment at 1–26 (MNGVFLAIGALLPICLAGGALLGYAA) is hydrophobic. Residues 32–90 (QGDPVAEQVNALLPQTQCGQCGYPGCKPYAEAIAAGDKINKCPPGGEATIRALADLLDL) enclose the 4Fe-4S domain. [4Fe-4S] cluster contacts are provided by Cys49, Cys52, Cys57, Cys73, Cys113, Cys116, Cys119, Cys123, Cys143, Cys146, Cys149, and Cys153. 2 4Fe-4S ferredoxin-type domains span residues 104-133 (RVAY…GAAR) and 134-163 (LMHT…MREI).

It belongs to the 4Fe4S bacterial-type ferredoxin family. RnfB subfamily. The complex is composed of six subunits: RnfA, RnfB, RnfC, RnfD, RnfE and RnfG. [4Fe-4S] cluster is required as a cofactor.

The protein resides in the cell inner membrane. Functionally, part of a membrane-bound complex that couples electron transfer with translocation of ions across the membrane. This chain is Ion-translocating oxidoreductase complex subunit B, found in Pseudomonas aeruginosa (strain LESB58).